The sequence spans 189 residues: Peptidyl-tRNA hydrolase (189 aa).

Y14 contacts tRNA. The active-site Proton acceptor is H19. Positions 64, 66, and 112 each coordinate tRNA.

Belongs to the PTH family. Monomer.

The protein localises to the cytoplasm. It catalyses the reaction an N-acyl-L-alpha-aminoacyl-tRNA + H2O = an N-acyl-L-amino acid + a tRNA + H(+). Functionally, hydrolyzes ribosome-free peptidyl-tRNAs (with 1 or more amino acids incorporated), which drop off the ribosome during protein synthesis, or as a result of ribosome stalling. In terms of biological role, catalyzes the release of premature peptidyl moieties from peptidyl-tRNA molecules trapped in stalled 50S ribosomal subunits, and thus maintains levels of free tRNAs and 50S ribosomes. The polypeptide is Peptidyl-tRNA hydrolase (Zymomonas mobilis subsp. mobilis (strain ATCC 31821 / ZM4 / CP4)).